Consider the following 1269-residue polypeptide: Phospholipase D A (1269 aa).

Residues 55–64 (YTSVGSAPTT) are compositionally biased toward polar residues. The interval 55–121 (YTSVGSAPTT…NNNLQSPTQS (67 aa)) is disordered. 2 stretches are compositionally biased toward low complexity: residues 65–87 (NNNSNSNSNSNSSNRSLNNSGSS) and 95–114 (NSNKKVNNNNNNNNNNNNNN). Residues 131 to 192 (SKALHDFEEK…ELKSLDELLH (62 aa)) adopt a coiled-coil conformation. Positions 222 to 232 (NSVTNNTPSSA) are enriched in polar residues. Disordered regions lie at residues 222–269 (NSVT…SSST) and 300–320 (NSYPNSIIPQGTPLDNPDPNL). The segment covering 233-269 (TPLTLSNNNNYTSSSLATSPTTNSSSSSSSSSSSSST) has biased composition (low complexity). PLD phosphodiesterase domains are found at residues 435–462 (IYWSHHQKTLIIDQEIAFVGGVDFCFGR) and 704–731 (EQIYVHSKLMIVDDRTIIVGSANINDRS). Catalysis depends on residues His-440, Lys-442, Asp-447, His-709, Lys-711, and Asp-716. Positions 803–835 (NNNNNSNINNNINNNNNEINNNNNNNNNNNSNE) form a coiled coil. Low complexity-rich tracts occupy residues 810–850 (INNN…NSNS), 859–906 (NLPP…GTTN), and 934–943 (SSPQDSPQDS). Disordered regions lie at residues 810–966 (INNN…HQSP) and 983–1007 (SNEQLPPPPSSTTPPPPPPPLTTTD). Over residues 987-1003 (LPPPPSSTTPPPPPPPL) the composition is skewed to pro residues. A coiled-coil region spans residues 1059-1096 (TTAQQQQQQQQQQQQQQQQQQQQQQQQQQQQQQQQQQQ). Residues 1116–1167 (IKKKRSSISPSTSSNKLLLSGNGSGDSIRVVTDSGSSPRGQPRSMSSLHDHA) form a disordered region. Residues 1122–1142 (SISPSTSSNKLLLSGNGSGDS) are compositionally biased toward low complexity. Polar residues predominate over residues 1148 to 1162 (DSGSSPRGQPRSMSS).

The protein belongs to the phospholipase D family.

It carries out the reaction a 1,2-diacyl-sn-glycero-3-phosphocholine + H2O = a 1,2-diacyl-sn-glycero-3-phosphate + choline + H(+). Its activity is regulated as follows. Inhibited by butan-1-ol. Plays a role in cell growth. Hydrolyzes membrane phospholipids, such as PtdCho free headgroup and PtdOH (phosphatidic acid; signaling molecule on its own). Involved in the inhibition of actin-based motility and endocytosis. Its inhibition causes complete collapse of F-actin organization. This chain is Phospholipase D A (pldA), found in Dictyostelium discoideum (Social amoeba).